The primary structure comprises 795 residues: Protein espinas (795 aa).

The interval 30–96 (GTGLTFPPHR…FVSPLQRRHC (67 aa)) is disordered. A compositionally biased stretch (low complexity) spans 52–66 (ASMSSNVASTATSSN). In terms of domain architecture, PET spans 135 to 243 (LDFQRNSQSD…AVRLLSDERP (109 aa)). LIM zinc-binding domains lie at 242-306 (RPCK…ETQK), 307-367 (PRCS…MFAE), and 368-430 (YCDY…GEPP). Disordered stretches follow at residues 427–487 (GEPP…GSAG) and 616–684 (NRNT…EMQI). Composition is skewed to basic and acidic residues over residues 459–471 (RSGD…ESSR) and 637–649 (LDNR…RFHS). The segment covering 650 to 662 (VQDTMSRSKSYTD) has biased composition (polar residues). The span at 666–675 (ARRRRRRRNQ) shows a compositional bias: basic residues.

Belongs to the prickle / espinas / testin family.

This Drosophila pseudoobscura pseudoobscura (Fruit fly) protein is Protein espinas.